A 313-amino-acid chain; its full sequence is tRNA dimethylallyltransferase (313 aa).

8-15 (GPTGTGKS) lines the ATP pocket. 10 to 15 (TGTGKS) serves as a coordination point for substrate.

This sequence belongs to the IPP transferase family. Monomer. Mg(2+) is required as a cofactor.

The enzyme catalyses adenosine(37) in tRNA + dimethylallyl diphosphate = N(6)-dimethylallyladenosine(37) in tRNA + diphosphate. Its function is as follows. Catalyzes the transfer of a dimethylallyl group onto the adenine at position 37 in tRNAs that read codons beginning with uridine, leading to the formation of N6-(dimethylallyl)adenosine (i(6)A). The sequence is that of tRNA dimethylallyltransferase from Mycolicibacterium gilvum (strain PYR-GCK) (Mycobacterium gilvum (strain PYR-GCK)).